Here is a 463-residue protein sequence, read N- to C-terminus: ATP-dependent protease ATPase subunit HslU (463 aa).

ATP-binding positions include Ile-19, 61–66, Asp-277, Glu-341, and Arg-413; that span reads GVGKTE.

Belongs to the ClpX chaperone family. HslU subfamily. A double ring-shaped homohexamer of HslV is capped on each side by a ring-shaped HslU homohexamer. The assembly of the HslU/HslV complex is dependent on binding of ATP.

Its subcellular location is the cytoplasm. Its function is as follows. ATPase subunit of a proteasome-like degradation complex; this subunit has chaperone activity. The binding of ATP and its subsequent hydrolysis by HslU are essential for unfolding of protein substrates subsequently hydrolyzed by HslV. HslU recognizes the N-terminal part of its protein substrates and unfolds these before they are guided to HslV for hydrolysis. This is ATP-dependent protease ATPase subunit HslU from Bacillus cereus (strain AH187).